Consider the following 142-residue polypeptide: Ribonuclease VapC31 (142 aa).

The PINc domain maps to 3–139; sequence LLDANVLLAA…ARFASVRHIR (137 aa). The Mg(2+) site is built by aspartate 5 and aspartate 108.

This sequence belongs to the PINc/VapC protein family. It depends on Mg(2+) as a cofactor.

In terms of biological role, toxic component of a type II toxin-antitoxin (TA) system. An RNase. Its toxic effect is neutralized by coexpression with cognate antitoxin VapB31. This chain is Ribonuclease VapC31, found in Mycobacterium tuberculosis (strain CDC 1551 / Oshkosh).